The sequence spans 1270 residues: Myosin-3 (1270 aa).

A disordered region spans residues 1–20 (MAVIKKGARRKDVKEPKKRS). Residues 36–715 (VGVSDLTLLS…SLFALEDMRD (680 aa)) form the Myosin motor domain. 129–136 (GESGAGKT) contacts ATP. Residue Ser357 is modified to Phosphoserine. An actin-binding region spans residues 404-486 (SIGILDIYGF…PGILAAMNDS (83 aa)). 2 consecutive IQ domains span residues 719–739 (YNMAARIQRAWRRFLQRRIDA) and 740–765 (AIKIQRTIREKKGGNKYVKLRDYGTK). Positions 771–961 (KERRSMSLLG…TIYVRRGHPA (191 aa)) constitute a TH1 domain. 3 disordered regions span residues 951 to 1015 (STIY…QKPV), 1029 to 1136 (YNPK…GSSS), and 1215 to 1270 (VQFG…DDDW). The span at 980-1000 (IKSKKSKHKSTHKHTHSHRSH) shows a compositional bias: basic residues. Residues 1066-1078 (KKASSSHKSSSAK) show a composition bias toward low complexity. A compositionally biased stretch (basic and acidic residues) spans 1089 to 1098 (GVEKNKEPLK). Pro residues predominate over residues 1107–1116 (PIPPPPPPMG). The 63-residue stretch at 1118–1180 (PKDPKFEAAY…PTAYMTPYKD (63 aa)) folds into the SH3 domain. Over residues 1215-1234 (VQFGSATVGPTSDNQSNPVG) the composition is skewed to polar residues. The span at 1256-1270 (ADDDDNDDGDDDDDW) shows a compositional bias: acidic residues.

The protein belongs to the TRAFAC class myosin-kinesin ATPase superfamily. Myosin family. As to quaternary structure, interacts (via myosin motor domain) with SHE4; this interaction is important for proper localization and may regulate the interaction of the motor domain with actin. Interacts (via SH3 domain) with VRP1; this interaction is required for localization to sites of polarized growth and may regulate the interaction of the tail domain with actin. Interacts (via SH3 domain) with PAN1; this interaction is important for late stages of endocytopsis. Interacts (via SH3 domain) with BBC1 and LAS17. Interacts (via C-terminal acidic tail) with ARC19 and ARC40; ARC19 and ARC40 are Arp2/3 complex subunits. In terms of processing, phosphorylation of the TEDS site (Ser-357) is required for the polarization of the actin cytoskeleton and for ligand-induced, but not for constitutive internalization of STE2. Phosphorylation probably activates the myosin-I ATPase. Ser-357 is phosphorylated by CLA4 and STE20 in vitro.

It is found in the cytoplasm. It localises to the cytoskeleton. Its subcellular location is the actin patch. One of two redundant type-I myosins implicated in the organization of the actin cytoskeleton. Required for proper actin cytoskeleton polarization and for the internalization step in endocytosis. At the cell cortex, assembles in patch-like structures together with proteins from the actin-polymerizing machinery and promotes actin assembly. Functions redundantly with LAS17 as actin nucleation-promoting factor (NPF) for the Arp2/3 complex. Motor domain phosphorylation by PAK kinases CLA4 and STE20 promotes CDC42-regulated actin assembly. Functions together with the NPF PAN1 in late stages of endocytosis. Motor domain phosphorylation by PDK1 kinases PKH1 and PKH2, and by SGK kinases YPK1 and YPK2, promotes ligand-induced, but not constitutive endocytosis of the G protein-coupled receptor STE2. This chain is Myosin-3 (MYO3), found in Saccharomyces cerevisiae (strain YJM789) (Baker's yeast).